A 352-amino-acid polypeptide reads, in one-letter code: Adenosine deaminase (352 aa).

Positions 24 and 26 each coordinate Zn(2+). Residues His-26, Asp-28, and Gly-181 each coordinate substrate. His-208 lines the Zn(2+) pocket. Glu-211 (proton donor) is an active-site residue. Position 290 (Asp-290) interacts with Zn(2+).

The protein belongs to the metallo-dependent hydrolases superfamily. Adenosine and AMP deaminases family. Adenosine deaminase subfamily. Requires Zn(2+) as cofactor.

It catalyses the reaction adenosine + H2O + H(+) = inosine + NH4(+). It carries out the reaction 2'-deoxyadenosine + H2O + H(+) = 2'-deoxyinosine + NH4(+). Functionally, catalyzes the hydrolytic deamination of adenosine and 2-deoxyadenosine. In Lactococcus lactis subsp. lactis (strain IL1403) (Streptococcus lactis), this protein is Adenosine deaminase.